The primary structure comprises 820 residues: Leucine--tRNA ligase (820 aa).

The short motif at 42–52 is the 'HIGH' region element; that stretch reads PYPSGDLHMGH. The 'KMSKS' region signature appears at 576 to 580; sequence KMSKS. Residue K579 participates in ATP binding.

It belongs to the class-I aminoacyl-tRNA synthetase family.

The protein localises to the cytoplasm. It carries out the reaction tRNA(Leu) + L-leucine + ATP = L-leucyl-tRNA(Leu) + AMP + diphosphate. This chain is Leucine--tRNA ligase, found in Coxiella burnetii (strain RSA 331 / Henzerling II).